Reading from the N-terminus, the 654-residue chain is Acetyl-coenzyme A synthetase (654 aa).

CoA-binding positions include R193–K196 and T313. ATP-binding positions include G389–P391, D413–T418, D506, and R521. Position 529 (S529) interacts with CoA. R532 lines the ATP pocket. The Mg(2+) site is built by H545 and V548. K619 carries the N6-acetyllysine modification.

Belongs to the ATP-dependent AMP-binding enzyme family. Mg(2+) serves as cofactor. In terms of processing, acetylated. Deacetylation by the SIR2-homolog deacetylase activates the enzyme.

It carries out the reaction acetate + ATP + CoA = acetyl-CoA + AMP + diphosphate. Catalyzes the conversion of acetate into acetyl-CoA (AcCoA), an essential intermediate at the junction of anabolic and catabolic pathways. AcsA undergoes a two-step reaction. In the first half reaction, AcsA combines acetate with ATP to form acetyl-adenylate (AcAMP) intermediate. In the second half reaction, it can then transfer the acetyl group from AcAMP to the sulfhydryl group of CoA, forming the product AcCoA. The sequence is that of Acetyl-coenzyme A synthetase from Wolinella succinogenes (strain ATCC 29543 / DSM 1740 / CCUG 13145 / JCM 31913 / LMG 7466 / NCTC 11488 / FDC 602W) (Vibrio succinogenes).